The following is a 149-amino-acid chain: UPF0178 protein lwe1471 (149 aa).

The protein belongs to the UPF0178 family.

The sequence is that of UPF0178 protein lwe1471 from Listeria welshimeri serovar 6b (strain ATCC 35897 / DSM 20650 / CCUG 15529 / CIP 8149 / NCTC 11857 / SLCC 5334 / V8).